The chain runs to 368 residues: Histidinol-phosphate aminotransferase (368 aa).

Lys224 is modified (N6-(pyridoxal phosphate)lysine).

This sequence belongs to the class-II pyridoxal-phosphate-dependent aminotransferase family. Histidinol-phosphate aminotransferase subfamily. In terms of assembly, homodimer. Pyridoxal 5'-phosphate is required as a cofactor.

The catalysed reaction is L-histidinol phosphate + 2-oxoglutarate = 3-(imidazol-4-yl)-2-oxopropyl phosphate + L-glutamate. It participates in amino-acid biosynthesis; L-histidine biosynthesis; L-histidine from 5-phospho-alpha-D-ribose 1-diphosphate: step 7/9. This chain is Histidinol-phosphate aminotransferase, found in Agrobacterium fabrum (strain C58 / ATCC 33970) (Agrobacterium tumefaciens (strain C58)).